Reading from the N-terminus, the 102-residue chain is MSEEKPLKVSYSKQFVRDLTDLAKRSPNVLIGSKYITAIHCLLNRLPLPENYQDHALVGEWKGYRDCHIQGDLVLIYQYVIQDEFDELKFSRLNIHSQTALK.

It belongs to the RelE toxin family. YafQ subfamily.

Functionally, toxic component of a type II toxin-antitoxin (TA) system. Its cognate antitoxin is RelB. The chain is Putative toxin YafQ from Haemophilus influenzae (strain ATCC 51907 / DSM 11121 / KW20 / Rd).